A 344-amino-acid chain; its full sequence is N-acetyl-gamma-glutamyl-phosphate reductase (344 aa).

Cys149 is a catalytic residue.

Belongs to the NAGSA dehydrogenase family. Type 1 subfamily.

The protein localises to the cytoplasm. The catalysed reaction is N-acetyl-L-glutamate 5-semialdehyde + phosphate + NADP(+) = N-acetyl-L-glutamyl 5-phosphate + NADPH + H(+). Its pathway is amino-acid biosynthesis; L-arginine biosynthesis; N(2)-acetyl-L-ornithine from L-glutamate: step 3/4. Its function is as follows. Catalyzes the NADPH-dependent reduction of N-acetyl-5-glutamyl phosphate to yield N-acetyl-L-glutamate 5-semialdehyde. The chain is N-acetyl-gamma-glutamyl-phosphate reductase from Thermoanaerobacter sp. (strain X514).